The sequence spans 450 residues: Probable ECA polymerase (450 aa).

The next 11 helical transmembrane spans lie at Phe-6–Phe-26, Val-37–Leu-57, Val-63–Ala-83, Val-118–Leu-138, Gly-155–Leu-175, Ala-181–Gly-201, Ile-207–Trp-227, Met-228–Tyr-248, Leu-341–Ile-361, Tyr-378–Ala-398, and Val-410–Phe-430.

Belongs to the WzyE family. As to quaternary structure, probably part of a complex composed of WzxE, WzyE and WzzE.

The protein resides in the cell inner membrane. It functions in the pathway bacterial outer membrane biogenesis; enterobacterial common antigen biosynthesis. In terms of biological role, probably involved in the polymerization of enterobacterial common antigen (ECA) trisaccharide repeat units. This is Probable ECA polymerase from Shigella flexneri.